Consider the following 367-residue polypeptide: Peptide chain release factor 2 (367 aa).

Glutamine 254 bears the N5-methylglutamine mark.

The protein belongs to the prokaryotic/mitochondrial release factor family. Post-translationally, methylated by PrmC. Methylation increases the termination efficiency of RF2.

The protein localises to the cytoplasm. In terms of biological role, peptide chain release factor 2 directs the termination of translation in response to the peptide chain termination codons UGA and UAA. In Leptospira interrogans serogroup Icterohaemorrhagiae serovar copenhageni (strain Fiocruz L1-130), this protein is Peptide chain release factor 2.